Reading from the N-terminus, the 176-residue chain is ATP-dependent protease subunit HslV (176 aa).

Thr5 is an active-site residue. 3 residues coordinate Na(+): Ser161, Cys164, and Thr167.

This sequence belongs to the peptidase T1B family. HslV subfamily. In terms of assembly, a double ring-shaped homohexamer of HslV is capped on each side by a ring-shaped HslU homohexamer. The assembly of the HslU/HslV complex is dependent on binding of ATP.

It is found in the cytoplasm. It catalyses the reaction ATP-dependent cleavage of peptide bonds with broad specificity.. With respect to regulation, allosterically activated by HslU binding. Functionally, protease subunit of a proteasome-like degradation complex believed to be a general protein degrading machinery. The sequence is that of ATP-dependent protease subunit HslV from Caldanaerobacter subterraneus subsp. tengcongensis (strain DSM 15242 / JCM 11007 / NBRC 100824 / MB4) (Thermoanaerobacter tengcongensis).